The following is a 194-amino-acid chain: Adenylate kinase isoenzyme 1 (194 aa).

An ATP-binding site is contributed by 19-24 (GSGKGT). Positions 39–68 (STGDLLRAEVSSGSERGKKLQAIMEKGELV) are NMP. AMP is bound by residues Thr-40, Arg-45, 66–68 (ELV), 95–98 (GYPR), and Gln-102. Residues 132 to 142 (KRGETSGRVDD) form an LID region. Arg-133 lines the ATP pocket. AMP is bound by residues Arg-139 and Arg-150. Gly-178 serves as a coordination point for ATP.

This sequence belongs to the adenylate kinase family. AK1 subfamily. Monomer. The cofactor is Mg(2+). Skeletal muscle.

It is found in the cytoplasm. The enzyme catalyses a ribonucleoside 5'-phosphate + ATP = a ribonucleoside 5'-diphosphate + ADP. It carries out the reaction AMP + ATP = 2 ADP. It catalyses the reaction dAMP + ATP = dADP + ADP. The catalysed reaction is dATP + AMP = dADP + ADP. The enzyme catalyses dAMP + dATP = 2 dADP. It carries out the reaction a 2'-deoxyribonucleoside 5'-diphosphate + ATP = a 2'-deoxyribonucleoside 5'-triphosphate + ADP. It catalyses the reaction a ribonucleoside 5'-diphosphate + ATP = a ribonucleoside 5'-triphosphate + ADP. The catalysed reaction is CDP + GTP = CTP + GDP. The enzyme catalyses GDP + ATP = GTP + ADP. It carries out the reaction UDP + ATP = UTP + ADP. It catalyses the reaction GTP + UDP = UTP + GDP. The catalysed reaction is dTDP + GTP = dTTP + GDP. The enzyme catalyses dCDP + GTP = dCTP + GDP. It carries out the reaction dGDP + ATP = dGTP + ADP. It catalyses the reaction dADP + GTP = dATP + GDP. The catalysed reaction is thiamine diphosphate + ADP = thiamine triphosphate + AMP. Its function is as follows. Catalyzes the reversible transfer of the terminal phosphate group between ATP and AMP. Also displays broad nucleoside diphosphate kinase activity. Plays an important role in cellular energy homeostasis and in adenine nucleotide metabolism. Also catalyzes at a very low rate the synthesis of thiamine triphosphate (ThTP) from thiamine diphosphate (ThDP) and ADP. The protein is Adenylate kinase isoenzyme 1 of Gallus gallus (Chicken).